The primary structure comprises 139 residues: Large ribosomal subunit protein bL9m (139 aa).

The tract at residues 83-121 is disordered; it reads DHQQLSKRHETEVQKNMELRKESVFGHKKEEKPKEEKKG.

This sequence belongs to the bacterial ribosomal protein bL9 family. In terms of assembly, component of the mitochondrial large ribosomal subunit (mt-LSU). Mature yeast 74S mitochondrial ribosomes consist of a small (37S) and a large (54S) subunit. The 37S small subunit contains a 15S ribosomal RNA (15S mt-rRNA) and 34 different proteins. The 54S large subunit contains a 21S rRNA (21S mt-rRNA) and 46 different proteins.

It is found in the mitochondrion. Its function is as follows. Component of the mitochondrial ribosome (mitoribosome), a dedicated translation machinery responsible for the synthesis of mitochondrial genome-encoded proteins, including at least some of the essential transmembrane subunits of the mitochondrial respiratory chain. The mitoribosomes are attached to the mitochondrial inner membrane and translation products are cotranslationally integrated into the membrane. The chain is Large ribosomal subunit protein bL9m (MRPL50) from Saccharomyces cerevisiae (strain ATCC 204508 / S288c) (Baker's yeast).